A 505-amino-acid chain; its full sequence is L-carnitine/gamma-butyrobetaine antiporter (505 aa).

Helical transmembrane passes span 10–30 (IEPK…WLTV), 51–71 (WGWA…WLVF), 92–112 (IFMM…SIEI), 143–163 (GPLP…FFFV), 195–215 (FYLV…TPLV), 231–251 (LDAI…ACGL), 263–283 (SYLS…SFIM), 316–336 (WTVF…IFLA), 347–367 (LCFG…TVLG), 403–423 (LSTA…VTLI), 446–466 (LLVR…LLAL), and 475–495 (AIIA…LSFI).

This sequence belongs to the BCCT transporter (TC 2.A.15) family. CaiT subfamily. As to quaternary structure, homotrimer.

It is found in the cell inner membrane. The enzyme catalyses 4-(trimethylamino)butanoate(in) + (R)-carnitine(out) = 4-(trimethylamino)butanoate(out) + (R)-carnitine(in). Its pathway is amine and polyamine metabolism; carnitine metabolism. Functionally, catalyzes the exchange of L-carnitine for gamma-butyrobetaine. The protein is L-carnitine/gamma-butyrobetaine antiporter of Salmonella choleraesuis (strain SC-B67).